We begin with the raw amino-acid sequence, 473 residues long: Photosystem II CP43 reaction center protein (473 aa).

The propeptide occupies 1 to 14 (MKILYSPRRFYPVE). Thr15 is modified (N-acetylthreonine). Thr15 carries the post-translational modification Phosphothreonine. 5 helical membrane-spanning segments follow: residues 69–93 (LFEV…PHLA), 134–155 (IIGP…KDKN), 178–200 (KALY…RKIT), 255–275 (KPFA…LSYS), and 291–312 (WFNN…ASQA). Residue Glu367 coordinates [CaMn4O5] cluster. Residues 447–471 (RARAAAAGFEKGIDRDFEPVLSTTP) traverse the membrane as a helical segment.

This sequence belongs to the PsbB/PsbC family. PsbC subfamily. As to quaternary structure, PSII is composed of 1 copy each of membrane proteins PsbA, PsbB, PsbC, PsbD, PsbE, PsbF, PsbH, PsbI, PsbJ, PsbK, PsbL, PsbM, PsbT, PsbX, PsbY, PsbZ, Psb30/Ycf12, at least 3 peripheral proteins of the oxygen-evolving complex and a large number of cofactors. It forms dimeric complexes. Binds multiple chlorophylls and provides some of the ligands for the Ca-4Mn-5O cluster of the oxygen-evolving complex. It may also provide a ligand for a Cl- that is required for oxygen evolution. PSII binds additional chlorophylls, carotenoids and specific lipids. serves as cofactor.

It is found in the plastid. The protein resides in the chloroplast thylakoid membrane. Functionally, one of the components of the core complex of photosystem II (PSII). It binds chlorophyll and helps catalyze the primary light-induced photochemical processes of PSII. PSII is a light-driven water:plastoquinone oxidoreductase, using light energy to abstract electrons from H(2)O, generating O(2) and a proton gradient subsequently used for ATP formation. The polypeptide is Photosystem II CP43 reaction center protein (Huperzia lucidula (Shining clubmoss)).